Consider the following 407-residue polypeptide: Phosphopentomutase (407 aa).

Mn(2+) contacts are provided by aspartate 10, aspartate 306, histidine 311, aspartate 347, histidine 348, and histidine 359.

The protein belongs to the phosphopentomutase family. Mn(2+) serves as cofactor.

It localises to the cytoplasm. The enzyme catalyses 2-deoxy-alpha-D-ribose 1-phosphate = 2-deoxy-D-ribose 5-phosphate. It catalyses the reaction alpha-D-ribose 1-phosphate = D-ribose 5-phosphate. The protein operates within carbohydrate degradation; 2-deoxy-D-ribose 1-phosphate degradation; D-glyceraldehyde 3-phosphate and acetaldehyde from 2-deoxy-alpha-D-ribose 1-phosphate: step 1/2. Functionally, isomerase that catalyzes the conversion of deoxy-ribose 1-phosphate (dRib-1-P) and ribose 1-phosphate (Rib-1-P) to deoxy-ribose 5-phosphate (dRib-5-P) and ribose 5-phosphate (Rib-5-P), respectively. The sequence is that of Phosphopentomutase from Shigella boydii serotype 18 (strain CDC 3083-94 / BS512).